We begin with the raw amino-acid sequence, 550 residues long: Tyrosinase HcTyr2 (550 aa).

Cu cation is bound by residues His56, His84, His93, His282, His286, and His326.

This sequence belongs to the tyrosinase family. The cofactor is Cu(2+).

The catalysed reaction is L-tyrosine + O2 = L-dopaquinone + H2O. The enzyme catalyses 2 L-tyrosine + O2 = 2 L-dopa. It catalyses the reaction 2 L-dopa + O2 = 2 L-dopaquinone + 2 H2O. Functionally, copper-containing oxidase that catalyzes the conversion of L-tyrosine to L-dopa and then to L-dopaquinone. Can use various phenols such as p-coumaric acid, phenol, pyrocatechol, syringol or pyrogallol. Accepts several of the constituents of lignin and potentially participates in lignin functionalization. The polypeptide is Tyrosinase HcTyr2 (Hahella sp. (strain CCB-MM4)).